Here is a 178-residue protein sequence, read N- to C-terminus: ATP-dependent protease subunit HslV (178 aa).

Thr-7 is an active-site residue. Na(+) is bound by residues Gly-162, Cys-165, and Thr-168.

This sequence belongs to the peptidase T1B family. HslV subfamily. In terms of assembly, a double ring-shaped homohexamer of HslV is capped on each side by a ring-shaped HslU homohexamer. The assembly of the HslU/HslV complex is dependent on binding of ATP.

The protein resides in the cytoplasm. The enzyme catalyses ATP-dependent cleavage of peptide bonds with broad specificity.. Allosterically activated by HslU binding. Functionally, protease subunit of a proteasome-like degradation complex believed to be a general protein degrading machinery. The sequence is that of ATP-dependent protease subunit HslV from Burkholderia ambifaria (strain MC40-6).